The chain runs to 369 residues: Glycolate oxidase 1 (369 aa).

The FMN hydroxy acid dehydrogenase domain occupies 1–360; sequence MGEITNVMEY…TRKHIITESD (360 aa). Y25 is a binding site for glyoxylate. FMN-binding positions include 78 to 80, S107, 128 to 130, and T156; these read PTA and QLY. Y130 is a binding site for glyoxylate. R165 contacts glyoxylate. FMN is bound by residues K231 and S253. Residues H255 and R258 each coordinate glyoxylate. The active-site Proton acceptor is H255. FMN is bound by residues 286 to 290 and 309 to 310; these read DGGVR and GR.

The protein belongs to the FMN-dependent alpha-hydroxy acid dehydrogenase family. In terms of assembly, homotetramer. It depends on FMN as a cofactor.

It localises to the peroxisome. It catalyses the reaction glycolate + O2 = glyoxylate + H2O2. Its pathway is photosynthesis; photorespiration; glycine from 2-phosphoglycolate: step 2/3. Functionally, catalyzes the oxidation of glycolate to glyoxylate, with a reduction of O2 to H2O2. Is an essential enzyme in photorespiration in plants. Photorespiration plays a vital role in C4 photosynthesis in Z.mays and is essential for maize seedling development and maintaining low (non-toxic) levels of glycolate. This Zea mays (Maize) protein is Glycolate oxidase 1.